The sequence spans 49 residues: Large ribosomal subunit protein bL36 (49 aa).

Belongs to the bacterial ribosomal protein bL36 family.

This is Large ribosomal subunit protein bL36 from Delftia acidovorans (strain DSM 14801 / SPH-1).